A 58-amino-acid polypeptide reads, in one-letter code: UPF0391 membrane protein VP0082 (58 aa).

Helical transmembrane passes span 4–24 (WMFIFLALALVSAVLGFSGIA) and 30–50 (VAQVIFYLFLLSLIVSIVFVI).

This sequence belongs to the UPF0391 family.

It localises to the cell membrane. This Vibrio parahaemolyticus serotype O3:K6 (strain RIMD 2210633) protein is UPF0391 membrane protein VP0082.